We begin with the raw amino-acid sequence, 102 residues long: ATP-dependent Clp protease adapter protein ClpS (102 aa).

It belongs to the ClpS family. In terms of assembly, binds to the N-terminal domain of the chaperone ClpA.

Involved in the modulation of the specificity of the ClpAP-mediated ATP-dependent protein degradation. This is ATP-dependent Clp protease adapter protein ClpS from Janthinobacterium sp. (strain Marseille) (Minibacterium massiliensis).